Reading from the N-terminus, the 229-residue chain is Glycerol-3-phosphate acyltransferase (229 aa).

The next 6 helical transmembrane spans lie at 2 to 22, 56 to 76, 93 to 113, 129 to 149, 151 to 171, and 178 to 198; these read WSLTVILLISYFLGSIPGALW, LATVVDFGKGFLAAGVVASVI, FVVLGLLAGVGAVIGHMYPIF, LFALTPLTMAITLAVFVAVLL, SRYVSLSSITAAVAFPTIVAL, and ADLDPSLLVFGGLLALSIVVA.

Belongs to the PlsY family. In terms of assembly, probably interacts with PlsX.

The protein resides in the cell inner membrane. The catalysed reaction is an acyl phosphate + sn-glycerol 3-phosphate = a 1-acyl-sn-glycero-3-phosphate + phosphate. It participates in lipid metabolism; phospholipid metabolism. Its function is as follows. Catalyzes the transfer of an acyl group from acyl-phosphate (acyl-PO(4)) to glycerol-3-phosphate (G3P) to form lysophosphatidic acid (LPA). This enzyme utilizes acyl-phosphate as fatty acyl donor, but not acyl-CoA or acyl-ACP. In Salinibacter ruber (strain DSM 13855 / M31), this protein is Glycerol-3-phosphate acyltransferase.